We begin with the raw amino-acid sequence, 41 residues long: Large ribosomal subunit protein bL36 (41 aa).

This sequence belongs to the bacterial ribosomal protein bL36 family.

This chain is Large ribosomal subunit protein bL36, found in Rhodopseudomonas palustris (strain TIE-1).